The following is a 234-amino-acid chain: Carbohydrate deacetylase (234 aa).

The Mg(2+) site is built by His60 and His123.

It belongs to the YdjC deacetylase family. Mg(2+) is required as a cofactor.

Its function is as follows. Probably catalyzes the deacetylation of acetylated carbohydrates an important step in the degradation of oligosaccharides. The chain is Carbohydrate deacetylase from Bacillus anthracis.